A 108-amino-acid polypeptide reads, in one-letter code: Protein S100-A15A (108 aa).

The EF-hand domain occupies 53 to 88; sequence KEPYYITELFQAADKNKDNQICFDEFLYILGKLVKD. Ca(2+)-binding residues include aspartate 66, asparagine 68, aspartate 70, glutamine 72, and glutamate 77.

Belongs to the S-100 family.

This chain is Protein S100-A15A (S100A15A), found in Pongo abelii (Sumatran orangutan).